A 506-amino-acid polypeptide reads, in one-letter code: 2-isopropylmalate synthase (506 aa).

Positions 6-267 (IIVFDTTLRD…YTDIVTKEIY (262 aa)) constitute a Pyruvate carboxyltransferase domain. Mn(2+) contacts are provided by D15, H201, H203, and N237. The tract at residues 391 to 506 (SIQTLSTSSC…LNSYLSMKNR (116 aa)) is regulatory domain.

This sequence belongs to the alpha-IPM synthase/homocitrate synthase family. LeuA type 1 subfamily. Homodimer. It depends on Mn(2+) as a cofactor.

Its subcellular location is the cytoplasm. The catalysed reaction is 3-methyl-2-oxobutanoate + acetyl-CoA + H2O = (2S)-2-isopropylmalate + CoA + H(+). It functions in the pathway amino-acid biosynthesis; L-leucine biosynthesis; L-leucine from 3-methyl-2-oxobutanoate: step 1/4. Catalyzes the condensation of the acetyl group of acetyl-CoA with 3-methyl-2-oxobutanoate (2-ketoisovalerate) to form 3-carboxy-3-hydroxy-4-methylpentanoate (2-isopropylmalate). The polypeptide is 2-isopropylmalate synthase (Campylobacter fetus subsp. fetus (strain 82-40)).